The primary structure comprises 156 residues: Small ribosomal subunit protein uS7 (156 aa).

The protein belongs to the universal ribosomal protein uS7 family. Part of the 30S ribosomal subunit. Contacts proteins S9 and S11.

Its function is as follows. One of the primary rRNA binding proteins, it binds directly to 16S rRNA where it nucleates assembly of the head domain of the 30S subunit. Is located at the subunit interface close to the decoding center, probably blocks exit of the E-site tRNA. This Streptomyces coelicolor (strain ATCC BAA-471 / A3(2) / M145) protein is Small ribosomal subunit protein uS7 (rspG).